A 296-amino-acid chain; its full sequence is 4-hydroxy-tetrahydrodipicolinate synthase (296 aa).

Thr49 is a binding site for pyruvate. Tyr137 acts as the Proton donor/acceptor in catalysis. Lys165 functions as the Schiff-base intermediate with substrate in the catalytic mechanism. Val207 provides a ligand contact to pyruvate.

Belongs to the DapA family. In terms of assembly, homotetramer; dimer of dimers.

It is found in the cytoplasm. It catalyses the reaction L-aspartate 4-semialdehyde + pyruvate = (2S,4S)-4-hydroxy-2,3,4,5-tetrahydrodipicolinate + H2O + H(+). It participates in amino-acid biosynthesis; L-lysine biosynthesis via DAP pathway; (S)-tetrahydrodipicolinate from L-aspartate: step 3/4. In terms of biological role, catalyzes the condensation of (S)-aspartate-beta-semialdehyde [(S)-ASA] and pyruvate to 4-hydroxy-tetrahydrodipicolinate (HTPA). This is 4-hydroxy-tetrahydrodipicolinate synthase from Nitrobacter hamburgensis (strain DSM 10229 / NCIMB 13809 / X14).